A 343-amino-acid chain; its full sequence is Aldehyde reductase 2 (343 aa).

Y177 lines the NADP(+) pocket.

Belongs to the NAD(P)-dependent epimerase/dehydratase family. Dihydroflavonol-4-reductase subfamily. As to quaternary structure, monomer.

The enzyme catalyses a primary alcohol + NADP(+) = an aldehyde + NADPH + H(+). Inhibited by quercetin and diphenylhydantoin. In terms of biological role, catalyzes the asymmetric reduction of o-substituted aliphatic and aromatic aldehydes and ketones to an S-enantiomer. Reduces ethyl 4-chloro-3-oxobutanoate to ethyl (S)-4-chloro-3-hydroxybutanoate. In Sporidiobolus salmonicolor (Yeast-like fungus), this protein is Aldehyde reductase 2.